A 336-amino-acid chain; its full sequence is Aspartate carbamoyltransferase catalytic subunit (336 aa).

Carbamoyl phosphate is bound by residues arginine 72 and threonine 73. Residue lysine 100 coordinates L-aspartate. 3 residues coordinate carbamoyl phosphate: arginine 122, histidine 155, and glutamine 158. 2 residues coordinate L-aspartate: arginine 188 and arginine 242. 2 residues coordinate carbamoyl phosphate: glycine 288 and proline 289.

The protein belongs to the aspartate/ornithine carbamoyltransferase superfamily. ATCase family. As to quaternary structure, heterododecamer (2C3:3R2) of six catalytic PyrB chains organized as two trimers (C3), and six regulatory PyrI chains organized as three dimers (R2).

It carries out the reaction carbamoyl phosphate + L-aspartate = N-carbamoyl-L-aspartate + phosphate + H(+). Its pathway is pyrimidine metabolism; UMP biosynthesis via de novo pathway; (S)-dihydroorotate from bicarbonate: step 2/3. Its function is as follows. Catalyzes the condensation of carbamoyl phosphate and aspartate to form carbamoyl aspartate and inorganic phosphate, the committed step in the de novo pyrimidine nucleotide biosynthesis pathway. This is Aspartate carbamoyltransferase catalytic subunit from Lactobacillus leichmannii.